A 21-amino-acid polypeptide reads, in one-letter code: thr operon leader peptide (21 aa).

Belongs to the thr operon leader peptide family.

In terms of biological role, this protein is involved in control of the biosynthesis of threonine. This is thr operon leader peptide from Shigella boydii serotype 18 (strain CDC 3083-94 / BS512).